We begin with the raw amino-acid sequence, 775 residues long: WD repeat-containing protein pop1 (775 aa).

The 48-residue stretch at 298–345 folds into the F-box domain; the sequence is KNFLTGFPAEITNLVLTHLDAPSLCAVSQVSHHWYKLVSSNEELWKSL. WD repeat units follow at residues 444 to 472, 484 to 538, 575 to 603, 615 to 645, and 657 to 687; these read EHEGDVWTFEYVGDTLVTGSTDRTVRVWD, GHTS…RLWS, GHTDSVREVACLGDLIVSASYDGTLRVWK, GHVGRVYSVTINPSRQQCISAGTDAKIRIWN, and GHSNLVSQVTFNQNILVSASAPPDTSLRVWD.

As to quaternary structure, homodimer and heterodimer with pop2. Binds to cdc18, phosphorylated cig2, cul1, pip1 and skp1.

It localises to the nucleus. Involved in maintenance of ploidy through proteasome dependent degradation of CDK inhibitor rum1 and S-phase initiator cdc18. Functions as a recognition factor for rum1 and cdc18, which are subsequently ubiquitinated and targeted to the 26S proteasome for degradation. Together with pop2, required for cig2 instability during G2 and M phase and cig2 degradation in exponentially growing cells. Regulates cell-cycle progression under starvation through the rum1 protein. The sequence is that of WD repeat-containing protein pop1 (pop1) from Schizosaccharomyces pombe (strain 972 / ATCC 24843) (Fission yeast).